The sequence spans 484 residues: Probable autolysin PH (484 aa).

Residues 5–148 enclose the Peptidase C51 domain; sequence KNQAEKWFDN…YYDDPMYFIR (144 aa). The 183-residue stretch at 181-363 folds into the MurNAc-LAA domain; sequence IMLVAGHGYN…YSKLIAGAIH (183 aa). The SH3b domain maps to 402–472; it reads KETGYYTVAN…IATGEVDKAG (71 aa).

The catalysed reaction is Hydrolyzes the link between N-acetylmuramoyl residues and L-amino acid residues in certain cell-wall glycopeptides.. Has weak lytic activity toward S.aureus cells. Full-length protein has no activity, but fusion of the Peptidase C51 domain to the lysostaphin SH3 cell wall binding domain yields an active chimeric enzyme, suggesting that PH may be functional. This chain is Probable autolysin PH, found in Staphylococcus aureus (strain NCTC 8325 / PS 47).